The sequence spans 320 residues: Ferrochelatase (320 aa).

Fe cation contacts are provided by His194 and Glu275.

It belongs to the ferrochelatase family. As to quaternary structure, monomer.

It localises to the cytoplasm. It catalyses the reaction heme b + 2 H(+) = protoporphyrin IX + Fe(2+). It participates in porphyrin-containing compound metabolism; protoheme biosynthesis; protoheme from protoporphyrin-IX: step 1/1. Its function is as follows. Catalyzes the ferrous insertion into protoporphyrin IX. The protein is Ferrochelatase of Salmonella dublin (strain CT_02021853).